The sequence spans 322 residues: L-asparaginase (322 aa).

The region spanning 3–322 is the Asparaginase/glutaminase domain; the sequence is KKVALITTGG…KEGIKDKFCY (320 aa). The active-site O-isoaspartyl threonine intermediate is Thr-13. Substrate-binding positions include Ser-56 and 89-90; that span reads TD.

It belongs to the asparaginase 1 family. Homotetramer.

The protein localises to the cytoplasm. The catalysed reaction is L-asparagine + H2O = L-aspartate + NH4(+). In Bacillus licheniformis, this protein is L-asparaginase (ansA).